A 342-amino-acid chain; its full sequence is Protein-glutamate methylesterase/protein-glutamine glutaminase 1 (342 aa).

Residues 3 to 121 (RVLVIDDSLF…NIREIGGELK (119 aa)) form the Response regulatory domain. Aspartate 54 bears the 4-aspartylphosphate mark. Residues 141–340 (DSNARNVVLI…EKIVETIRAM (200 aa)) form the CheB-type methylesterase domain. Catalysis depends on residues serine 153, histidine 180, and aspartate 282.

This sequence belongs to the CheB family. Phosphorylated by CheA. Phosphorylation of the N-terminal regulatory domain activates the methylesterase activity.

The protein localises to the cytoplasm. The catalysed reaction is [protein]-L-glutamate 5-O-methyl ester + H2O = L-glutamyl-[protein] + methanol + H(+). It carries out the reaction L-glutaminyl-[protein] + H2O = L-glutamyl-[protein] + NH4(+). Involved in chemotaxis. Part of a chemotaxis signal transduction system that modulates chemotaxis in response to various stimuli. Catalyzes the demethylation of specific methylglutamate residues introduced into the chemoreceptors (methyl-accepting chemotaxis proteins or MCP) by CheR. Also mediates the irreversible deamidation of specific glutamine residues to glutamic acid. In Methanospirillum hungatei JF-1 (strain ATCC 27890 / DSM 864 / NBRC 100397 / JF-1), this protein is Protein-glutamate methylesterase/protein-glutamine glutaminase 1.